Consider the following 477-residue polypeptide: Glutamyl-tRNA(Gln) amidotransferase subunit A (477 aa).

Residues K68 and S143 each act as charge relay system in the active site. S167 acts as the Acyl-ester intermediate in catalysis.

The protein belongs to the amidase family. GatA subfamily. In terms of assembly, heterotrimer of A, B and C subunits.

It catalyses the reaction L-glutamyl-tRNA(Gln) + L-glutamine + ATP + H2O = L-glutaminyl-tRNA(Gln) + L-glutamate + ADP + phosphate + H(+). Functionally, allows the formation of correctly charged Gln-tRNA(Gln) through the transamidation of misacylated Glu-tRNA(Gln) in organisms which lack glutaminyl-tRNA synthetase. The reaction takes place in the presence of glutamine and ATP through an activated gamma-phospho-Glu-tRNA(Gln). This chain is Glutamyl-tRNA(Gln) amidotransferase subunit A (gatA), found in Mycoplasma genitalium (strain ATCC 33530 / DSM 19775 / NCTC 10195 / G37) (Mycoplasmoides genitalium).